Consider the following 341-residue polypeptide: 33 kDa chaperonin (341 aa).

2 disulfide bridges follow: cysteine 245–cysteine 247 and cysteine 278–cysteine 281.

It belongs to the HSP33 family. In terms of processing, under oxidizing conditions two disulfide bonds are formed involving the reactive cysteines. Under reducing conditions zinc is bound to the reactive cysteines and the protein is inactive.

Its subcellular location is the cytoplasm. In terms of biological role, redox regulated molecular chaperone. Protects both thermally unfolding and oxidatively damaged proteins from irreversible aggregation. Plays an important role in the bacterial defense system toward oxidative stress. In Thermus thermophilus (strain ATCC BAA-163 / DSM 7039 / HB27), this protein is 33 kDa chaperonin.